Here is a 528-residue protein sequence, read N- to C-terminus: Peptide chain release factor 3 (528 aa).

The tr-type G domain occupies asparagine 11 to leucine 279. GTP-binding positions include serine 20–threonine 27, aspartate 88–histidine 92, and asparagine 142–aspartate 145.

The protein belongs to the TRAFAC class translation factor GTPase superfamily. Classic translation factor GTPase family. PrfC subfamily.

It localises to the cytoplasm. Increases the formation of ribosomal termination complexes and stimulates activities of RF-1 and RF-2. It binds guanine nucleotides and has strong preference for UGA stop codons. It may interact directly with the ribosome. The stimulation of RF-1 and RF-2 is significantly reduced by GTP and GDP, but not by GMP. The polypeptide is Peptide chain release factor 3 (Shewanella sp. (strain W3-18-1)).